Here is a 105-residue protein sequence, read N- to C-terminus: Large ribosomal subunit protein uL24 (105 aa).

Residues 40–61 form a disordered region; it reads RIKKHTPQSANERGASSGGIVT.

Belongs to the universal ribosomal protein uL24 family. Part of the 50S ribosomal subunit.

Its function is as follows. One of two assembly initiator proteins, it binds directly to the 5'-end of the 23S rRNA, where it nucleates assembly of the 50S subunit. One of the proteins that surrounds the polypeptide exit tunnel on the outside of the subunit. This chain is Large ribosomal subunit protein uL24, found in Mycobacteroides abscessus (strain ATCC 19977 / DSM 44196 / CCUG 20993 / CIP 104536 / JCM 13569 / NCTC 13031 / TMC 1543 / L948) (Mycobacterium abscessus).